The primary structure comprises 102 residues: Co-chaperonin GroES (102 aa).

It belongs to the GroES chaperonin family. In terms of assembly, heptamer of 7 subunits arranged in a ring. Interacts with the chaperonin GroEL.

The protein localises to the cytoplasm. Together with the chaperonin GroEL, plays an essential role in assisting protein folding. The GroEL-GroES system forms a nano-cage that allows encapsulation of the non-native substrate proteins and provides a physical environment optimized to promote and accelerate protein folding. GroES binds to the apical surface of the GroEL ring, thereby capping the opening of the GroEL channel. The sequence is that of Co-chaperonin GroES from Anabaena sp. (strain L31).